A 365-amino-acid polypeptide reads, in one-letter code: Peptide chain release factor 2 (365 aa).

Residue glutamine 252 is modified to N5-methylglutamine.

It belongs to the prokaryotic/mitochondrial release factor family. Methylated by PrmC. Methylation increases the termination efficiency of RF2.

It localises to the cytoplasm. Its function is as follows. Peptide chain release factor 2 directs the termination of translation in response to the peptide chain termination codons UGA and UAA. The protein is Peptide chain release factor 2 of Colwellia psychrerythraea (strain 34H / ATCC BAA-681) (Vibrio psychroerythus).